The following is a 312-amino-acid chain: MLPRIRHNNFIGAVELFVKSSYTKTHSNNFFNNIHHAFKKKDWISNYDSLLTLREFFRCATQIDKSSYQVLSSKNETVNAMDKFLISFSLKDNGAEYTMTLRGSGFEYEEIPITINEYNSFMDFKNREFPLEQNRRLYAWDILQKKQSDIPKRIKGYIHQAIGDVSLGYALLDDIVSKLKRGKFELQGPGGGIKQCDGWYIYEKIIDDNFAIVIESLGFALKIYGGDERFRNGSSVVLEDEDYSLIYNFLVNAGCQQVELAEQVDAIVSANLAADSDITKEKICEKYKSTIEAFKKEQLALPVLVRRKNSET.

This is an uncharacterized protein from Escherichia coli O157:H7.